Here is a 289-residue protein sequence, read N- to C-terminus: uncharacterized protein (289 aa).

This is an uncharacterized protein from Schizosaccharomyces pombe (strain 972 / ATCC 24843) (Fission yeast).